Here is a 133-residue protein sequence, read N- to C-terminus: Aspartate 1-decarboxylase (133 aa).

The active-site Schiff-base intermediate with substrate; via pyruvic acid is Ser-26. The residue at position 26 (Ser-26) is a Pyruvic acid (Ser). Thr-58 contacts substrate. Residue Tyr-59 is the Proton donor of the active site. Substrate is bound at residue Gly-74–Ala-76.

This sequence belongs to the PanD family. Heterooctamer of four alpha and four beta subunits. Pyruvate is required as a cofactor. Post-translationally, is synthesized initially as an inactive proenzyme, which is activated by self-cleavage at a specific serine bond to produce a beta-subunit with a hydroxyl group at its C-terminus and an alpha-subunit with a pyruvoyl group at its N-terminus.

It is found in the cytoplasm. It catalyses the reaction L-aspartate + H(+) = beta-alanine + CO2. Its pathway is cofactor biosynthesis; (R)-pantothenate biosynthesis; beta-alanine from L-aspartate: step 1/1. Functionally, catalyzes the pyruvoyl-dependent decarboxylation of aspartate to produce beta-alanine. This chain is Aspartate 1-decarboxylase, found in Legionella pneumophila (strain Paris).